The sequence spans 336 residues: UPF0324 membrane protein BT_1919 (336 aa).

8 helical membrane-spanning segments follow: residues 2 to 19, 23 to 45, 85 to 107, 117 to 134, 147 to 169, 210 to 232, 253 to 275, and 310 to 332; these read LHGV…FYIG, FVRS…YANS, IGLP…GIYL, IALL…AAIL, TAVS…PFLY, AIIV…TYLV, WFAI…AQLV, and FVLA…KYLT.

This sequence belongs to the UPF0324 family.

The protein resides in the cell membrane. The polypeptide is UPF0324 membrane protein BT_1919 (Bacteroides thetaiotaomicron (strain ATCC 29148 / DSM 2079 / JCM 5827 / CCUG 10774 / NCTC 10582 / VPI-5482 / E50)).